A 58-amino-acid polypeptide reads, in one-letter code: Large ribosomal subunit protein uL30 (58 aa).

The protein belongs to the universal ribosomal protein uL30 family. Part of the 50S ribosomal subunit.

The protein is Large ribosomal subunit protein uL30 of Blochmanniella floridana.